The following is a 310-amino-acid chain: Ribosomal RNA small subunit methyltransferase H (310 aa).

Residues 33–35 (GGH), Asp-52, Phe-79, Asp-98, and Gln-105 contribute to the S-adenosyl-L-methionine site.

The protein belongs to the methyltransferase superfamily. RsmH family.

It localises to the cytoplasm. It catalyses the reaction cytidine(1402) in 16S rRNA + S-adenosyl-L-methionine = N(4)-methylcytidine(1402) in 16S rRNA + S-adenosyl-L-homocysteine + H(+). Its function is as follows. Specifically methylates the N4 position of cytidine in position 1402 (C1402) of 16S rRNA. The sequence is that of Ribosomal RNA small subunit methyltransferase H from Campylobacter jejuni subsp. doylei (strain ATCC BAA-1458 / RM4099 / 269.97).